A 106-amino-acid polypeptide reads, in one-letter code: SDO1-like protein C21C3.19 (106 aa).

This sequence belongs to the SDO1-like family.

It localises to the cytoplasm. It is found in the nucleus. Its function is as follows. May play a role in RNA metabolism. This is SDO1-like protein C21C3.19 from Schizosaccharomyces pombe (strain 972 / ATCC 24843) (Fission yeast).